Reading from the N-terminus, the 220-residue chain is 7-cyano-7-deazaguanine synthase (220 aa).

10 to 20 (FSGGQDSTTCL) is an ATP binding site. Residues cysteine 186, cysteine 195, cysteine 198, and cysteine 201 each contribute to the Zn(2+) site.

It belongs to the QueC family. As to quaternary structure, homodimer. Requires Zn(2+) as cofactor.

It catalyses the reaction 7-carboxy-7-deazaguanine + NH4(+) + ATP = 7-cyano-7-deazaguanine + ADP + phosphate + H2O + H(+). It functions in the pathway purine metabolism; 7-cyano-7-deazaguanine biosynthesis. Its function is as follows. Catalyzes the ATP-dependent conversion of 7-carboxy-7-deazaguanine (CDG) to 7-cyano-7-deazaguanine (preQ(0)). The protein is 7-cyano-7-deazaguanine synthase of Bacillus cereus (strain AH187).